Here is a 321-residue protein sequence, read N- to C-terminus: Lipoyl synthase (321 aa).

Residues Cys68, Cys73, Cys79, Cys94, Cys98, Cys101, and Ser308 each contribute to the [4Fe-4S] cluster site. Residues 80–297 enclose the Radical SAM core domain; sequence FNHGTATFMI…KDVAMGLGFS (218 aa).

Belongs to the radical SAM superfamily. Lipoyl synthase family. It depends on [4Fe-4S] cluster as a cofactor.

It localises to the cytoplasm. It catalyses the reaction [[Fe-S] cluster scaffold protein carrying a second [4Fe-4S](2+) cluster] + N(6)-octanoyl-L-lysyl-[protein] + 2 oxidized [2Fe-2S]-[ferredoxin] + 2 S-adenosyl-L-methionine + 4 H(+) = [[Fe-S] cluster scaffold protein] + N(6)-[(R)-dihydrolipoyl]-L-lysyl-[protein] + 4 Fe(3+) + 2 hydrogen sulfide + 2 5'-deoxyadenosine + 2 L-methionine + 2 reduced [2Fe-2S]-[ferredoxin]. Its pathway is protein modification; protein lipoylation via endogenous pathway; protein N(6)-(lipoyl)lysine from octanoyl-[acyl-carrier-protein]: step 2/2. Functionally, catalyzes the radical-mediated insertion of two sulfur atoms into the C-6 and C-8 positions of the octanoyl moiety bound to the lipoyl domains of lipoate-dependent enzymes, thereby converting the octanoylated domains into lipoylated derivatives. In Aeromonas hydrophila subsp. hydrophila (strain ATCC 7966 / DSM 30187 / BCRC 13018 / CCUG 14551 / JCM 1027 / KCTC 2358 / NCIMB 9240 / NCTC 8049), this protein is Lipoyl synthase.